Reading from the N-terminus, the 593-residue chain is MGEALRGLKRTIMCGEPRENNIGQKVTVMGWVQRKRNLGGLIFVDLRDRTGIMQIVFGEEINKEAFEKSDNVKSEYCIAVTGEIVKRQSPNNDMETGAVELKGEDIKILSESETPPIYIKEGLDASENIRLKYRYLDLRRPDMQKIFMIRHKTCKVVRDFLDENGFLEMETPILTKSTPEGARDYLVPSRNYKGMFYALPQSPQIFKQLLMVSGYDKYFQITKCFRDEDLRANRQPEFTQIDMELSFIEEDDVIELNERLLAKVFKEVAGIDVKLPIERMPYKIAMEKYGSDKPDLRFGMEINDLTEAVKNSEFKVFKGAIEAGGSVRAIKAGNCATMGRKQIDKLQDFVKTYKAKGLAWIAYKEDEIKSPIAKFLTEEEMKAILEKMDAKVGDLILIVADKNNVVFESLGALRLHLAKELDIINKDEFRFVWITEFPLLSYNEEEGRYQAEHHPFTALMDEDVELLDTDPGKVRAKAYDIVLNGEELGGGSIRIHDSKLQEKMFNVLGFTKEKAWERFGFLLEAFKFGPPPHGGLAYGLDRMIMFLAGTENIKDVITFPKNQNAFCPLTEAPNVVDENQLEELGIKKIEKED.

Position 180 (E180) interacts with L-aspartate. The tract at residues 204 to 207 is aspartate; it reads QIFK. R226 lines the L-aspartate pocket. Residues 226–228 and Q235 each bind ATP; that span reads RDE. An L-aspartate-binding site is contributed by H453. E487 serves as a coordination point for ATP. An L-aspartate-binding site is contributed by R494. Residue 539–542 participates in ATP binding; it reads GLDR.

Belongs to the class-II aminoacyl-tRNA synthetase family. Type 1 subfamily. In terms of assembly, homodimer.

The protein localises to the cytoplasm. It catalyses the reaction tRNA(Asp) + L-aspartate + ATP = L-aspartyl-tRNA(Asp) + AMP + diphosphate. In terms of biological role, catalyzes the attachment of L-aspartate to tRNA(Asp) in a two-step reaction: L-aspartate is first activated by ATP to form Asp-AMP and then transferred to the acceptor end of tRNA(Asp). The polypeptide is Aspartate--tRNA ligase (Clostridium botulinum (strain Loch Maree / Type A3)).